The chain runs to 222 residues: MAMYTAVSTSVVTQQQLSEPSAEAPRARPCRVTTADRSVRKGIMVHSLEDLHVKVRDTLMLAYKPFFLVLEEDGTTVETEEYFQSLADDTVFMVLHKGQKWQPPSEQSTRYQLALSHKPAKIDVARVTFDLYKVNPQDFIGCLNVKATLYGTYSVSYDLHCSGAKRIMKEALRWALFSMRTTGHMLLGTSCYLQQLLDATEREQPPKSKAASLIPTSLKMLQ.

The span at 1–19 (MAMYTAVSTSVVTQQQLSE) shows a compositional bias: polar residues. Disordered stretches follow at residues 1–33 (MAMY…CRVT) and 203–222 (EQPP…KMLQ). A required for liquid-liquid phase separation (LLPS) region spans residues 1–33 (MAMYTAVSTSVVTQQQLSEPSAEAPRARPCRVT). One can recognise a CIDE-N domain in the interval 26-103 (RARPCRVTTA…VLHKGQKWQP (78 aa)).

Belongs to the CIDE family. In terms of assembly, homodimer. Homooligomer; undergoes liquid-liquid phase separation (LLPS) via its N-terminus, facilitating lipid droplet fusion, occurs at the lipid droplet contact sites. Interacts with CIDEA. Interacts with PLIN1. Interacts with NFAT5; this interaction is direct and retains NFAT5 in the cytoplasm. Interacts with CEBPB. Interacts with isoform CLSTN3beta of CLSTN3; inhibiting the lipid transferase activity of CIDEC. Post-translationally, ubiquitinated and targeted to proteasomal degradation, resulting in a short half-life (about 15 minutes in 3T3-L1 cells). Protein stability depends on triaclyglycerol synthesis, fatty acid availability and lipid droplet formation.

It is found in the lipid droplet. The protein localises to the endoplasmic reticulum. It localises to the nucleus. The catalysed reaction is a triacyl-sn-glycerol(in) = a triacyl-sn-glycerol(out). Lipid transferase specifically expressed in white adipose tissue, which promotes unilocular lipid droplet formation by mediating lipid droplet fusion. Lipid droplet fusion promotes their enlargement, restricting lipolysis and favoring lipid storage. Localizes on the lipid droplet surface, at focal contact sites between lipid droplets, and mediates atypical lipid droplet fusion by undergoing liquid-liquid phase separation (LLPS) and promoting directional net neutral lipid transfer from the smaller to larger lipid droplets. The transfer direction may be driven by the internal pressure difference between the contacting lipid droplet pair. Its role in neutral lipid transfer and lipid droplet enlargement is activated by the interaction with PLIN1. May also act as a CEBPB coactivator in the white adipose tissue to control the expression of a subset of CEBPB downstream target genes, including SOCS1, SOCS3, TGFB1, TGFBR1, ID2 and XDH. When overexpressed in preadipocytes, induces apoptosis or increases cell susceptibility to apoptosis induced by serum deprivation or TGFB treatment. This Bos taurus (Bovine) protein is Lipid transferase CIDEC.